Reading from the N-terminus, the 362-residue chain is Holliday junction branch migration complex subunit RuvB (362 aa).

Positions 1–20 (MKRTIMTNTDTFEQPNTGAN) are disordered. The interval 15–203 (PNTGANEESL…FGFTAHLDFY (189 aa)) is large ATPase domain (RuvB-L). ATP-binding positions include leucine 42, arginine 43, glycine 84, lysine 87, threonine 88, threonine 89, 150–152 (EDF), arginine 193, tyrosine 203, and arginine 240. Threonine 88 contacts Mg(2+). A small ATPAse domain (RuvB-S) region spans residues 204–274 (PHEELEKLIE…DVKEALALYQ (71 aa)). Positions 277–362 (TEGLDRLDIA…ESAYDVNEMS (86 aa)) are head domain (RuvB-H). DNA is bound by residues arginine 332 and arginine 337.

Belongs to the RuvB family. In terms of assembly, homohexamer. Forms an RuvA(8)-RuvB(12)-Holliday junction (HJ) complex. HJ DNA is sandwiched between 2 RuvA tetramers; dsDNA enters through RuvA and exits via RuvB. An RuvB hexamer assembles on each DNA strand where it exits the tetramer. Each RuvB hexamer is contacted by two RuvA subunits (via domain III) on 2 adjacent RuvB subunits; this complex drives branch migration. In the full resolvosome a probable DNA-RuvA(4)-RuvB(12)-RuvC(2) complex forms which resolves the HJ.

The protein resides in the cytoplasm. The enzyme catalyses ATP + H2O = ADP + phosphate + H(+). Functionally, the RuvA-RuvB-RuvC complex processes Holliday junction (HJ) DNA during genetic recombination and DNA repair, while the RuvA-RuvB complex plays an important role in the rescue of blocked DNA replication forks via replication fork reversal (RFR). RuvA specifically binds to HJ cruciform DNA, conferring on it an open structure. The RuvB hexamer acts as an ATP-dependent pump, pulling dsDNA into and through the RuvAB complex. RuvB forms 2 homohexamers on either side of HJ DNA bound by 1 or 2 RuvA tetramers; 4 subunits per hexamer contact DNA at a time. Coordinated motions by a converter formed by DNA-disengaged RuvB subunits stimulates ATP hydrolysis and nucleotide exchange. Immobilization of the converter enables RuvB to convert the ATP-contained energy into a lever motion, pulling 2 nucleotides of DNA out of the RuvA tetramer per ATP hydrolyzed, thus driving DNA branch migration. The RuvB motors rotate together with the DNA substrate, which together with the progressing nucleotide cycle form the mechanistic basis for DNA recombination by continuous HJ branch migration. Branch migration allows RuvC to scan DNA until it finds its consensus sequence, where it cleaves and resolves cruciform DNA. The chain is Holliday junction branch migration complex subunit RuvB from Bifidobacterium adolescentis (strain ATCC 15703 / DSM 20083 / NCTC 11814 / E194a).